The following is a 774-amino-acid chain: FT-interacting protein 7 (774 aa).

A compositionally biased stretch (basic and acidic residues) spans 1–17 (MMQRPFRPEEYSLKETS). The interval 1 to 25 (MMQRPFRPEEYSLKETSPHLGGGAA) is disordered. 3 C2 domains span residues 23–143 (GAAG…PQWY), 182–305 (IPGD…SQWY), and 346–472 (YSSD…THAY). Ca(2+) is bound by residues Asp-56, Asp-62, Asp-109, Asp-111, and Asp-116. The next 3 membrane-spanning stretches (helical) occupy residues 575–595 (IMGV…ICHW), 606–626 (ILFV…FLYL), and 714–734 (ATAL…VTPF).

The protein belongs to the MCTP family. As to quaternary structure, interacts with OSH1. Ca(2+) is required as a cofactor. In terms of tissue distribution, expressed in roots, stems, lemma, palea, pistils and ovules. Expressed at low levels in leaves.

Its subcellular location is the cell membrane. Promotes nuclear translocation of the transcription factor OSH1, which directly suppresses the auxin biosynthetic gene YUCCA4 during the late development of anthers. Reduction of auxin levels at late stage of anther development, after meiosis of microspore mother cells, is necessary for normal anther dehiscence and seed setting. Required for jasmonate (JA) biosynthetic genes expression and JA production in anthers. The sequence is that of FT-interacting protein 7 from Oryza sativa subsp. japonica (Rice).